A 580-amino-acid chain; its full sequence is NADH-quinone oxidoreductase subunit C/D (580 aa).

An NADH dehydrogenase I subunit C region spans residues 1–171; sequence MSLDQAIPEA…PPFVLTDRLF (171 aa). An NADH dehydrogenase I subunit D region spans residues 195-580; the sequence is ELMVLNFGPH…IDFVMSDVDR (386 aa).

This sequence in the N-terminal section; belongs to the complex I 30 kDa subunit family. In the C-terminal section; belongs to the complex I 49 kDa subunit family. NDH-1 is composed of 13 different subunits. Subunits NuoB, CD, E, F, and G constitute the peripheral sector of the complex.

It localises to the cell inner membrane. The enzyme catalyses a quinone + NADH + 5 H(+)(in) = a quinol + NAD(+) + 4 H(+)(out). NDH-1 shuttles electrons from NADH, via FMN and iron-sulfur (Fe-S) centers, to quinones in the respiratory chain. The immediate electron acceptor for the enzyme in this species is believed to be ubiquinone. Couples the redox reaction to proton translocation (for every two electrons transferred, four hydrogen ions are translocated across the cytoplasmic membrane), and thus conserves the redox energy in a proton gradient. The polypeptide is NADH-quinone oxidoreductase subunit C/D (Cereibacter sphaeroides (strain KD131 / KCTC 12085) (Rhodobacter sphaeroides)).